The sequence spans 172 residues: Phosphopantetheine adenylyltransferase (172 aa).

Position 14 (T14) interacts with substrate. ATP-binding positions include 14–15 (TF) and H22. Substrate-binding residues include K46, L78, and R92. ATP is bound by residues 93–95 (GLR), E103, and 128–134 (WLYISST).

This sequence belongs to the bacterial CoaD family. As to quaternary structure, homohexamer. It depends on Mg(2+) as a cofactor.

It localises to the cytoplasm. The enzyme catalyses (R)-4'-phosphopantetheine + ATP + H(+) = 3'-dephospho-CoA + diphosphate. It participates in cofactor biosynthesis; coenzyme A biosynthesis; CoA from (R)-pantothenate: step 4/5. In terms of biological role, reversibly transfers an adenylyl group from ATP to 4'-phosphopantetheine, yielding dephospho-CoA (dPCoA) and pyrophosphate. This Lawsonia intracellularis (strain PHE/MN1-00) protein is Phosphopantetheine adenylyltransferase.